The primary structure comprises 3013 residues: Protein furry homolog-like (3013 aa).

At serine 2 the chain carries N-acetylserine. A disordered region spans residues 90-109 (DESYEYRPRSSTKSKGDEQQ). Serine 844 carries the phosphoserine modification. Disordered stretches follow at residues 878-897 (SSSTSAGSVRCSPPETLAST) and 1476-1498 (VTSGTTSSSNTMVAPTDGNPDNK). A compositionally biased stretch (low complexity) spans 1476–1486 (VTSGTTSSSNT). 5 positions are modified to phosphoserine: serine 1914, serine 1935, serine 1941, serine 1945, and serine 1957. Threonine 1959 bears the Phosphothreonine mark. Residues serine 1978, serine 2272, and serine 2454 each carry the phosphoserine modification. The segment at 2459–2492 (DKGDTPSLQEYQCSSSTPSLNLTNQEDTDESSEE) is disordered. The segment covering 2464–2483 (PSLQEYQCSSSTPSLNLTNQ) has biased composition (polar residues). Residue serine 2499 is modified to Phosphoserine. Disordered stretches follow at residues 2508–2567 (LNSD…DTTS) and 2636–2660 (EEEADFSGLSSQDEEEQDGFPEVQT). Polar residues-rich tracts occupy residues 2528–2539 (SEDSTGSITTEE) and 2555–2567 (DNANSRLPEDTTS).

The protein belongs to the furry protein family. Widely expressed with higher expression in colon, placenta, brain and cells of lymphoid origin.

Its function is as follows. Plays a key role in maintaining the integrity of polarized cell extensions during morphogenesis, regulates the actin cytoskeleton and plays a key role in patterning sensory neuron dendritic fields by promoting avoidance between homologous dendrites as well as by limiting dendritic branching. May function as a transcriptional activator. In Homo sapiens (Human), this protein is Protein furry homolog-like (FRYL).